The following is a 348-amino-acid chain: GDSL esterase/lipase At4g30140 (348 aa).

An N-terminal signal peptide occupies residues 1–28 (MVEGESKALWIILATVFAVAAVAPAVHG). The active-site Nucleophile is the Ser40. Residues Asp316 and His319 contribute to the active site. N-linked (GlcNAc...) asparagine glycosylation is present at Asn342.

Belongs to the 'GDSL' lipolytic enzyme family.

The protein resides in the secreted. The polypeptide is GDSL esterase/lipase At4g30140 (Arabidopsis thaliana (Mouse-ear cress)).